A 1022-amino-acid chain; its full sequence is Polyamine-modulated factor 1-binding protein 1 (1022 aa).

5 coiled-coil regions span residues 89 to 121 (NKQY…LQAS), 169 to 281 (EKLH…ACSN), 312 to 377 (SEDC…LREE), 411 to 732 (LKKD…SAIQ), and 758 to 968 (QDDL…KAGN). 2 stretches are compositionally biased toward basic and acidic residues: residues 545 to 556 (QKESSKIEEERK) and 571 to 582 (EGQRRLSNAEKE). Residues 545-582 (QKESSKIEEERKHNRQRLQELSSELSEGQRRLSNAEKE) form a disordered region.

In terms of tissue distribution, expressed in the testis.

It is found in the cell projection. It localises to the cilium. Its subcellular location is the flagellum. In terms of biological role, required for normal spermatogenesis. It functions as a scaffold protein that attaches the sperm head-tail connecting piece to the nuclear envelope, thus maintaining sperm head and tail integrity. May also be involved in the general organization of cellular cytoskeleton. This chain is Polyamine-modulated factor 1-binding protein 1 (Pmfbp1), found in Mus musculus (Mouse).